A 178-amino-acid polypeptide reads, in one-letter code: Large ribosomal subunit protein uL5 (178 aa).

Position 2 is an N-acetylalanine (A2). Residue K38 forms a Glycyl lysine isopeptide (Lys-Gly) (interchain with G-Cter in SUMO2) linkage. 2 positions are modified to phosphothreonine: T44 and T47. K52 carries the post-translational modification N6-acetyllysine; alternate. Residue K52 forms a Glycyl lysine isopeptide (Lys-Gly) (interchain with G-Cter in SUMO2); alternate linkage. N6-acetyllysine is present on K85. A Glycyl lysine isopeptide (Lys-Gly) (interchain with G-Cter in SUMO2) cross-link involves residue K154.

It belongs to the universal ribosomal protein uL5 family. Component of the large ribosomal subunit (LSU). Part of the 5S RNP complex, which is a LSU subcomplex composed of the 5S RNA, RPL5 and RPL11. Component of a hexameric 5S RNP precursor complex, composed of 5S RNA, RRS1, RPF2/BXDC1, RPL5, RPL11 and HEATR3; this complex acts as a precursor for ribosome assembly. Interacts with PML. Interacts with MDM2 (via its RanBP2-type zinc finger domain); negatively regulates MDM2-mediated TP53 ubiquitination and degradation. Interacts with NOP53; retains RPL11 into the nucleolus.

It localises to the nucleus. Its subcellular location is the nucleolus. The protein resides in the cytoplasm. Component of the ribosome, a large ribonucleoprotein complex responsible for the synthesis of proteins in the cell. The small ribosomal subunit (SSU) binds messenger RNAs (mRNAs) and translates the encoded message by selecting cognate aminoacyl-transfer RNA (tRNA) molecules. The large subunit (LSU) contains the ribosomal catalytic site termed the peptidyl transferase center (PTC), which catalyzes the formation of peptide bonds, thereby polymerizing the amino acids delivered by tRNAs into a polypeptide chain. The nascent polypeptides leave the ribosome through a tunnel in the LSU and interact with protein factors that function in enzymatic processing, targeting, and the membrane insertion of nascent chains at the exit of the ribosomal tunnel. As part of the 5S RNP/5S ribonucleoprotein particle it is an essential component of the LSU, required for its formation and the maturation of rRNAs. It also couples ribosome biogenesis to p53/TP53 activation. As part of the 5S RNP it accumulates in the nucleoplasm and inhibits MDM2, when ribosome biogenesis is perturbed, mediating the stabilization and the activation of TP53. Promotes nucleolar location of PML. This Pongo abelii (Sumatran orangutan) protein is Large ribosomal subunit protein uL5 (RPL11).